The following is a 538-amino-acid chain: tRNA-2-methylthio-N(6)-dimethylallyladenosine synthase (538 aa).

The interval 1-23 (MNEEQRLGRNGNTDAVSTKEAGS) is disordered. In terms of domain architecture, MTTase N-terminal spans 95–213 (KKFLVRTYGC…LPHLLRNALF (119 aa)). Cysteine 104, cysteine 140, cysteine 174, cysteine 250, cysteine 254, and cysteine 257 together coordinate [4Fe-4S] cluster. Residues 236–466 (REGKTQAWVN…NALVNDISAQ (231 aa)) form the Radical SAM core domain. Residues 469 to 532 (LEYQDKVVEV…TWSLNGEMVE (64 aa)) form the TRAM domain.

This sequence belongs to the methylthiotransferase family. MiaB subfamily. Monomer. Requires [4Fe-4S] cluster as cofactor.

Its subcellular location is the cytoplasm. It catalyses the reaction N(6)-dimethylallyladenosine(37) in tRNA + (sulfur carrier)-SH + AH2 + 2 S-adenosyl-L-methionine = 2-methylsulfanyl-N(6)-dimethylallyladenosine(37) in tRNA + (sulfur carrier)-H + 5'-deoxyadenosine + L-methionine + A + S-adenosyl-L-homocysteine + 2 H(+). Catalyzes the methylthiolation of N6-(dimethylallyl)adenosine (i(6)A), leading to the formation of 2-methylthio-N6-(dimethylallyl)adenosine (ms(2)i(6)A) at position 37 in tRNAs that read codons beginning with uridine. The polypeptide is tRNA-2-methylthio-N(6)-dimethylallyladenosine synthase (Halalkalibacterium halodurans (strain ATCC BAA-125 / DSM 18197 / FERM 7344 / JCM 9153 / C-125) (Bacillus halodurans)).